The sequence spans 128 residues: 3-aminoacrylate deaminase RutC (128 aa).

This sequence belongs to the RutC family. As to quaternary structure, homotrimer.

The catalysed reaction is (Z)-3-aminoacrylate + H2O + H(+) = 3-oxopropanoate + NH4(+). Functionally, involved in pyrimidine catabolism. Catalyzes the deamination of 3-aminoacrylate to malonic semialdehyde, a reaction that can also occur spontaneously. RutC may facilitate the reaction and modulate the metabolic fitness, rather than catalyzing essential functions. The chain is 3-aminoacrylate deaminase RutC from Escherichia coli O157:H7.